The sequence spans 506 residues: 2-isopropylmalate synthase (506 aa).

In terms of domain architecture, Pyruvate carboxyltransferase spans 4 to 266; the sequence is ILFMDTTLRD…EPSMTLKEIK (263 aa). Mn(2+) is bound by residues Asp-13, His-201, His-203, and Asn-237. Residues 390 to 506 are regulatory domain; sequence NITQLQVHFV…KLKSFIQLVK (117 aa).

The protein belongs to the alpha-IPM synthase/homocitrate synthase family. LeuA type 1 subfamily. In terms of assembly, homodimer. Mn(2+) serves as cofactor.

The protein localises to the cytoplasm. The catalysed reaction is 3-methyl-2-oxobutanoate + acetyl-CoA + H2O = (2S)-2-isopropylmalate + CoA + H(+). It participates in amino-acid biosynthesis; L-leucine biosynthesis; L-leucine from 3-methyl-2-oxobutanoate: step 1/4. Functionally, catalyzes the condensation of the acetyl group of acetyl-CoA with 3-methyl-2-oxobutanoate (2-ketoisovalerate) to form 3-carboxy-3-hydroxy-4-methylpentanoate (2-isopropylmalate). In Bacillus cereus (strain ATCC 10987 / NRS 248), this protein is 2-isopropylmalate synthase.